Here is a 111-residue protein sequence, read N- to C-terminus: Cornifelin homolog (111 aa).

The protein belongs to the cornifelin family.

The sequence is that of Cornifelin homolog (cnfn) from Xenopus tropicalis (Western clawed frog).